Consider the following 319-residue polypeptide: Carboxylesterase NlhH (319 aa).

Positions 88–90 (HGG) match the Involved in the stabilization of the negatively charged intermediate by the formation of the oxyanion hole motif. Active-site residues include Ser162, Asp260, and His290.

The protein belongs to the 'GDXG' lipolytic enzyme family. In terms of assembly, monomer.

The catalysed reaction is a carboxylic ester + H2O = an alcohol + a carboxylate + H(+). In terms of biological role, hydrolyzes various short-chain esters. This is Carboxylesterase NlhH (nlhH) from Mycobacterium tuberculosis (strain CDC 1551 / Oshkosh).